Reading from the N-terminus, the 385-residue chain is Probable nitrate transporter NarT (385 aa).

12 consecutive transmembrane segments (helical) span residues 14-34 (TLSL…MPYI), 47-67 (IILA…GYLT), 69-89 (IIGA…PIFF), 97-117 (GMLM…SVGV), 139-159 (GNIG…IIGW), 161-181 (TTVR…FIFG), 205-225 (LYYL…FGLF), 246-266 (GVFI…GDKF), 277-297 (IIMI…LFTI), 302-322 (ISIC…SYFA), 330-350 (GIVS…ITYV), and 359-379 (LAFI…GHLY).

The protein belongs to the major facilitator superfamily. Nitrate/nitrite porter (TC 2.A.1.8) family.

Its subcellular location is the cell membrane. Probably required for nitrate uptake under anoxic conditions. Also possibly involved in excretion of nitrite produced by the dissimilatory reduction of nitrate. This chain is Probable nitrate transporter NarT (narT), found in Staphylococcus haemolyticus (strain JCSC1435).